A 180-amino-acid chain; its full sequence is Large ribosomal subunit protein uL5 (180 aa).

This sequence belongs to the universal ribosomal protein uL5 family. Part of the 50S ribosomal subunit; part of the 5S rRNA/L5/L18/L25 subcomplex. Contacts the 5S rRNA and the P site tRNA. Forms a bridge to the 30S subunit in the 70S ribosome.

Functionally, this is one of the proteins that bind and probably mediate the attachment of the 5S RNA into the large ribosomal subunit, where it forms part of the central protuberance. In the 70S ribosome it contacts protein S13 of the 30S subunit (bridge B1b), connecting the 2 subunits; this bridge is implicated in subunit movement. Contacts the P site tRNA; the 5S rRNA and some of its associated proteins might help stabilize positioning of ribosome-bound tRNAs. This chain is Large ribosomal subunit protein uL5, found in Streptococcus suis (strain 05ZYH33).